The chain runs to 68 residues: Conotoxin Am6.8 (68 aa).

The signal sequence occupies residues 1-24; sequence MIRMGFFLTLTVAVLLTSLTCSEA. Residues 25-45 constitute a propeptide that is removed on maturation; it reads VPTDKREMERLFDRILLKDQR. Gln46 is modified (pyrrolidone carboxylic acid). Disulfide bonds link Cys47–Cys55, Cys50–Cys60, and Cys54–Cys65.

Belongs to the conotoxin U superfamily. Expressed by the venom duct.

It localises to the secreted. Its function is as follows. Probable toxin. In Conus amadis (Amadis cone), this protein is Conotoxin Am6.8.